The following is a 501-amino-acid chain: MSEEREENGISRATLNTQRLSAMIDSLNNEKDDRLFPSPTTTRTMITEEKADQSDVFKPPSRLLRSPAGDVSLPPGDNRSSMISNYSGIIQEGVEVSYVVKNRQQTQERRTSKDSNSLYSLKEPVSKNELPSLPMLPSEATLTKHLSDNQSTKSNTNADEIVIKPVTNAKPVGRFNSNTSKKVEGRGSLKLLSSPLRQEKVMRSSIGSGNLASESGSSTYNTKFHQSIQEQLEEEEEGNVSDKLSIVSSVIPELYTTTNEAPKAINPIRSETNDYNPTIPPRSKDRPRSRLFIEEGDGEGDLLTEEILPTPVQPGGHYKNSSQISTVSEQKSESYYSAATSMPPEEETYLTRPLPSTPNEDSRVTSNLKRDDTLKAIHDRANHTSTSTNKQDDDMYEDIIEETPKKTKLKKDTKKKLNKKKSVKELRSFDIDTLNQLLSVTKGTLIGSEFAQLGMKIEEKRALERLVDSLSRLTADMVLDPDRYEEGLKRLDKATKALEGF.

2 disordered regions span residues 1 to 78 and 102 to 133; these read MSEE…PGDN and NRQQ…LPSL. The segment covering 11–20 has biased composition (polar residues); sequence SRATLNTQRL. Basic and acidic residues predominate over residues 46–55; that stretch reads ITEEKADQSD. Residue Ser-138 is modified to Phosphoserine. Residues 146 to 165 form a disordered region; the sequence is LSDNQSTKSNTNADEIVIKP. Positions 148–158 are enriched in polar residues; it reads DNQSTKSNTNA. Phosphoserine is present on Ser-208. Disordered stretches follow at residues 267-286 and 338-366; these read PIRS…SKDR and AATS…RVTS. The interval 275–501 is necessary for the normal cellular distribution and bud neck targeting; sequence YNPTIPPRSK…DKATKALEGF (227 aa). Thr-403 carries the post-translational modification Phosphothreonine.

As to quaternary structure, interacts with NAP1 (via the central domain consisting of amino acids 143 to 362). Copurifies with ribosomes. Phosphorylated by CDC28.

It localises to the bud neck. The protein localises to the cytoplasm. This is Protein NBA1 (NBA1) from Saccharomyces cerevisiae (strain ATCC 204508 / S288c) (Baker's yeast).